Here is a 299-residue protein sequence, read N- to C-terminus: ATP phosphoribosyltransferase (299 aa).

Belongs to the ATP phosphoribosyltransferase family. Long subfamily. As to quaternary structure, equilibrium between an active dimeric form, an inactive hexameric form and higher aggregates. Interconversion between the various forms is largely reversible and is influenced by the natural substrates and inhibitors of the enzyme. It depends on Mg(2+) as a cofactor.

It localises to the cytoplasm. The enzyme catalyses 1-(5-phospho-beta-D-ribosyl)-ATP + diphosphate = 5-phospho-alpha-D-ribose 1-diphosphate + ATP. The protein operates within amino-acid biosynthesis; L-histidine biosynthesis; L-histidine from 5-phospho-alpha-D-ribose 1-diphosphate: step 1/9. With respect to regulation, feedback inhibited by histidine. Functionally, catalyzes the condensation of ATP and 5-phosphoribose 1-diphosphate to form N'-(5'-phosphoribosyl)-ATP (PR-ATP). Has a crucial role in the pathway because the rate of histidine biosynthesis seems to be controlled primarily by regulation of HisG enzymatic activity. The chain is ATP phosphoribosyltransferase from Escherichia coli O7:K1 (strain IAI39 / ExPEC).